Reading from the N-terminus, the 108-residue chain is Phosphoribosyl-ATP pyrophosphatase (108 aa).

This sequence belongs to the PRA-PH family.

It is found in the cytoplasm. It catalyses the reaction 1-(5-phospho-beta-D-ribosyl)-ATP + H2O = 1-(5-phospho-beta-D-ribosyl)-5'-AMP + diphosphate + H(+). It functions in the pathway amino-acid biosynthesis; L-histidine biosynthesis; L-histidine from 5-phospho-alpha-D-ribose 1-diphosphate: step 2/9. The protein is Phosphoribosyl-ATP pyrophosphatase of Thiobacillus denitrificans (strain ATCC 25259 / T1).